The sequence spans 210 residues: Small ribosomal subunit protein uS3 (210 aa).

A KH type-2 domain is found at Ile-17–Lys-86.

It belongs to the universal ribosomal protein uS3 family. In terms of assembly, part of the 30S ribosomal subunit.

Functionally, binds the lower part of the 30S subunit head. The polypeptide is Small ribosomal subunit protein uS3 (Pyrococcus horikoshii (strain ATCC 700860 / DSM 12428 / JCM 9974 / NBRC 100139 / OT-3)).